The chain runs to 440 residues: 3-phosphoshikimate 1-carboxyvinyltransferase (440 aa).

3-phosphoshikimate-binding residues include lysine 28, serine 29, and arginine 33. Lysine 28 is a phosphoenolpyruvate binding site. Phosphoenolpyruvate is bound by residues glycine 98 and arginine 126. Serine 171, glutamine 173, aspartate 318, and lysine 345 together coordinate 3-phosphoshikimate. Glutamine 173 is a phosphoenolpyruvate binding site. Aspartate 318 acts as the Proton acceptor in catalysis. Residues arginine 349 and arginine 391 each contribute to the phosphoenolpyruvate site.

Belongs to the EPSP synthase family. Monomer.

Its subcellular location is the cytoplasm. The catalysed reaction is 3-phosphoshikimate + phosphoenolpyruvate = 5-O-(1-carboxyvinyl)-3-phosphoshikimate + phosphate. Its pathway is metabolic intermediate biosynthesis; chorismate biosynthesis; chorismate from D-erythrose 4-phosphate and phosphoenolpyruvate: step 6/7. Catalyzes the transfer of the enolpyruvyl moiety of phosphoenolpyruvate (PEP) to the 5-hydroxyl of shikimate-3-phosphate (S3P) to produce enolpyruvyl shikimate-3-phosphate and inorganic phosphate. The sequence is that of 3-phosphoshikimate 1-carboxyvinyltransferase from Anaeromyxobacter dehalogenans (strain 2CP-C).